Reading from the N-terminus, the 331-residue chain is MNDNVLLIGASGFVGTRLLETAIADFNIKNLDKQQSHFYPEITQIGDVRDQQALDQALAGFDTVVLLAAEHRDDVSPTSLYYDVNVQGTRNVLAAMEKNGVKNIIFTSSVAVYGLNKHNPDENHPHDPFNHYGKSKWQAEEVLREWYNKAPTERSLTIIRPTVIFGERNRGNVYNLLKQIAGGKFMMVGAGTNYKSMAYVGNIVEFIKYKLKNVAAGYEVYNYVDKPDLNMNQLVAEVEQSLNKKIPSMHLPYPLGMLGGYCFDILSKITGKKYAVSSVRVKKFCATTQFDATKVHSSGFVAPYTLSQGLDRTLQYEFVHAKKDDITFVSE.

NAD(+)-binding positions include 13-14 (FV), 34-39 (QQSHFY), 47-48 (DV), serine 109, tyrosine 132, and lysine 136. Residues serine 109 and tyrosine 132 each contribute to the substrate site. Catalysis depends on tyrosine 132, which acts as the Proton acceptor. Residues 183–184 (GK) and 199–201 (YVG) contribute to the substrate site.

It belongs to the NAD(P)-dependent epimerase/dehydratase family. Requires NAD(+) as cofactor.

It is found in the cell membrane. The catalysed reaction is N-acetyl-alpha-D-glucosaminyl-di-trans,octa-cis-undecaprenyl diphosphate = N-acetyl-alpha-D-galactosaminyl-di-trans,octa-cis-undecaprenyl diphosphate. It functions in the pathway bacterial outer membrane biogenesis; LPS O-antigen biosynthesis. Its function is as follows. Involved in biosynthesis of the repeating tetrasaccharide unit of the O-antigen. Catalyzes the reversible epimerization of the hydroxyl group at position C4 of undecaprenyl pyrophosphate-N-acetylglucosamine (UndPP-GlcNAc) to yield undecaprenyl pyrophosphate-N-acetylgalactosamine (UndPP-GalNAc). This is N-acetyl-alpha-D-glucosaminyl-diphospho-ditrans,octacis-undecaprenol 4-epimerase from Escherichia coli O157:H7.